The primary structure comprises 483 residues: Aspartyl/glutamyl-tRNA(Asn/Gln) amidotransferase subunit B (483 aa).

It belongs to the GatB/GatE family. GatB subfamily. Heterotrimer of A, B and C subunits.

It catalyses the reaction L-glutamyl-tRNA(Gln) + L-glutamine + ATP + H2O = L-glutaminyl-tRNA(Gln) + L-glutamate + ADP + phosphate + H(+). The catalysed reaction is L-aspartyl-tRNA(Asn) + L-glutamine + ATP + H2O = L-asparaginyl-tRNA(Asn) + L-glutamate + ADP + phosphate + 2 H(+). Allows the formation of correctly charged Asn-tRNA(Asn) or Gln-tRNA(Gln) through the transamidation of misacylated Asp-tRNA(Asn) or Glu-tRNA(Gln) in organisms which lack either or both of asparaginyl-tRNA or glutaminyl-tRNA synthetases. The reaction takes place in the presence of glutamine and ATP through an activated phospho-Asp-tRNA(Asn) or phospho-Glu-tRNA(Gln). The chain is Aspartyl/glutamyl-tRNA(Asn/Gln) amidotransferase subunit B from Rickettsia rickettsii (strain Sheila Smith).